The chain runs to 564 residues: Hsp70-Hsp90 organising protein (564 aa).

TPR repeat units follow at residues 7 to 40 (AQRL…DPLD), 42 to 74 (VLYS…KKDW), and 76 to 108 (KGYI…DPNN). Positions 197–239 (EGNDAEERQRQQREEEERRKKKEEEERKKKEEEEMKKQNRTPE) form a coiled coil. Positions 199-247 (NDAEERQRQQREEEERRKKKEEEERKKKEEEEMKKQNRTPEQIQGDEHK) are disordered. Basic and acidic residues predominate over residues 201–233 (AEERQRQQREEEERRKKKEEEERKKKEEEEMKK). 6 TPR repeats span residues 243–276 (GDEH…NPND), 278–310 (MYHY…RYNF), 318–351 (AKLY…DNNR), 378–411 (AEEH…NPND), 413–445 (KLYS…DPTF), and 446–479 (VKAY…DPNN). One can recognise an STI1 domain in the interval 513-552 (DPEIQQIISDPQFQIILQKLNENPNSISEYIKDPKIFNGL).

Monomer. Homodimer. Forms a complex composed of HOP and chaperones HSP70 and HSP90; the interaction is stronger in the absence of ATP. Interacts (via TPR 1, 2, 3, 7, 8 and 9 repeats) with HSP70 (via C-terminus); the interaction is direct and is stronger in the absence of ATP. Interacts (via TPR 4, 5 and 6 repeats) with HSP90 (via C-terminus); the interaction is direct.

Its subcellular location is the cytoplasm. Functionally, acts as a co-chaperone and mediates the association of the chaperones HSP70 and HSP90 probably facilitating substrate transfer from HSP70 to HSP90. Stimulates HSP70 ATPase activity and, in contrast, inhibits HSP90 ATPase activity. The chain is Hsp70-Hsp90 organising protein from Plasmodium falciparum (isolate 3D7).